Reading from the N-terminus, the 41-residue chain is MNDLQKYLSTAPVLLTLWMTFTAGFIIEINRFFPDMLGLYF.

The helical transmembrane segment at 7–27 threads the bilayer; that stretch reads YLSTAPVLLTLWMTFTAGFII.

The protein belongs to the PsaJ family.

The protein resides in the plastid. The protein localises to the chloroplast thylakoid membrane. May help in the organization of the PsaE and PsaF subunits. This chain is Photosystem I reaction center subunit IX, found in Trieres chinensis (Marine centric diatom).